A 433-amino-acid polypeptide reads, in one-letter code: Adenylosuccinate synthetase (433 aa).

Residues 11–17 (GDEGKGK) and 39–41 (GHT) contribute to the GTP site. The Proton acceptor role is filled by Asp12. Positions 12 and 39 each coordinate Mg(2+). IMP-binding positions include 12–15 (DEGK), 37–40 (NAGH), Thr134, Arg148, Asn230, Thr245, and Arg309. Catalysis depends on His40, which acts as the Proton donor. A substrate-binding site is contributed by 305 to 311 (VTTGRKR). GTP contacts are provided by residues Arg311, 337–339 (KLD), and 419–421 (GTG).

This sequence belongs to the adenylosuccinate synthetase family. Homodimer. It depends on Mg(2+) as a cofactor.

Its subcellular location is the cytoplasm. It carries out the reaction IMP + L-aspartate + GTP = N(6)-(1,2-dicarboxyethyl)-AMP + GDP + phosphate + 2 H(+). Its pathway is purine metabolism; AMP biosynthesis via de novo pathway; AMP from IMP: step 1/2. Plays an important role in the de novo pathway and in the salvage pathway of purine nucleotide biosynthesis. Catalyzes the first committed step in the biosynthesis of AMP from IMP. The polypeptide is Adenylosuccinate synthetase (Saccharomyces cerevisiae (strain YJM789) (Baker's yeast)).